The sequence spans 235 residues: Claudin-16 (235 aa).

The Cytoplasmic segment spans residues 1 to 3 (MRD). Residues 4–24 (LLQYIACFFAFFSAGFLIVAT) traverse the membrane as a helical segment. Residues 25–79 (WTDCWMVNADDSLEVSTKCRGLWWECVTNAFDGIRTCDEYDSILAEHPLKLVVTR) are Extracellular-facing. A helical transmembrane segment spans residues 80–100 (ALMITADILAGFGFLTLLLGL). Residues 101–115 (DCVKFLPDEPYIKVR) lie on the Cytoplasmic side of the membrane. A helical membrane pass occupies residues 116 to 136 (ICFVAGATLLIAGTPGIIGSV). Residues 137–169 (WYAVDVYVERSTLVLHNIFLGIQYKFGWSCWLG) lie on the Extracellular side of the membrane. A helical membrane pass occupies residues 170–190 (MAGSLGCFLAGAVLTCCLYLF). At 191-235 (KDVGPERNYPYSLRKAYSAAGVSMAKSYSAPRTETAKMYAVDTRV) the chain is on the cytoplasmic side. The short motif at 233–235 (TRV) is the Interaction with TJP1 element.

It belongs to the claudin family. Can form heteropolymeric tight junction strands with other claudins. Interacts with CLDN19. Interacts (via PDZ-binding motif TRV) with TJP1 (via PDZ domain). Cannot form tight junction strands on its own. Kidney-specific, including the thick ascending limb of Henle (TAL).

The protein localises to the cell junction. Its subcellular location is the tight junction. It localises to the cell membrane. It carries out the reaction Mg(2+)(in) = Mg(2+)(out). It catalyses the reaction Ca(2+)(in) = Ca(2+)(out). The catalysed reaction is Na(+)(in) = Na(+)(out). The enzyme catalyses K(+)(in) = K(+)(out). It carries out the reaction Rb(+)(in) = Rb(+)(out). It catalyses the reaction Cs(+)(in) = Cs(+)(out). The catalysed reaction is Li(+)(in) = Li(+)(out). Forms paracellular channels: coassembles with CLDN19 into tight junction strands with cation-selective channels through the strands, conveying epithelial permeability in a process known as paracellular tight junction permeability. Involved in the maintenance of ion gradients along the nephron. In the thick ascending limb (TAL) of Henle's loop, facilitates sodium paracellular permeability from the interstitial compartment to the lumen, contributing to the lumen-positive transepithelial potential that drives paracellular magnesium and calcium reabsorption. In Homo sapiens (Human), this protein is Claudin-16.